The primary structure comprises 903 residues: Chitin synthase 1 (903 aa).

The tract at residues 1-154 is disordered; sequence MDPRYGAQPQ…YQDQPQQGGG (154 aa). Positions 67–79 are enriched in polar residues; the sequence is DHLNLNAAQSVDN. N-linked (GlcNAc...) asparagine glycosylation is present at N79. Low complexity predominate over residues 100–117; sequence YYNQPYEPRPQQQPYDQG. The segment covering 135–150 has biased composition (polar residues); the sequence is HQPSDAPSEPYQDQPQ. 9 consecutive transmembrane segments (helical) span residues 444–464, 543–563, 573–593, 619–639, 654–674, 700–720, 729–749, 828–848, and 875–895; these read SAFGFISVLPGAFSAYRYVAL, RWLNGSFFAAIYAIVHFLDFL, FAFFIEFIFNTINMIFAWFAI, ILGVVFTWLYGVFLITCFVLS, MCWFWAIIMIYLLFAAIFIAV, MLIISVMSTFGIWLIASLIML, LVQYMLLTPTFTNVLNVYAFC, GVVLIWMVSNFGLAALVLSSA, and IVLWSVAGLSAFKFIGAMWFL.

The protein belongs to the chitin synthase family. Class I subfamily.

The protein localises to the cell membrane. The enzyme catalyses [(1-&gt;4)-N-acetyl-beta-D-glucosaminyl](n) + UDP-N-acetyl-alpha-D-glucosamine = [(1-&gt;4)-N-acetyl-beta-D-glucosaminyl](n+1) + UDP + H(+). Its function is as follows. Polymerizes chitin, a structural polymer of the cell wall and septum, by transferring the sugar moiety of UDP-GlcNAc to the non-reducing end of the growing chitin polymer. Plays an important role in nuclear sorting or distribution. This chain is Chitin synthase 1, found in Fusarium oxysporum f. sp. lycopersici (strain 4287 / CBS 123668 / FGSC 9935 / NRRL 34936) (Fusarium vascular wilt of tomato).